The following is a 591-amino-acid chain: Dihydroxyacetone kinase 2 (591 aa).

A DhaK domain is found at Ser-8–Trp-344. The tract at residues Ala-40–Ser-59 is disordered. Substrate contacts are provided by residues Gly-58–His-61, Lys-109, and Asp-114. The Tele-hemiaminal-histidine intermediate role is filled by His-223. Positions Asp-384–Thr-587 constitute a DhaL domain. ATP is bound by residues Asp-413 to Cys-416, Thr-459 to Ser-460, Thr-511 to Leu-512, and Asp-572 to Gly-574.

It belongs to the dihydroxyacetone kinase (DAK) family.

It catalyses the reaction dihydroxyacetone + ATP = dihydroxyacetone phosphate + ADP + H(+). The enzyme catalyses D-glyceraldehyde + ATP = D-glyceraldehyde 3-phosphate + ADP + H(+). Its pathway is polyol metabolism; glycerol fermentation; glycerone phosphate from glycerol (oxidative route): step 2/2. Its function is as follows. Catalyzes both the phosphorylation of dihydroxyacetone and of glyceraldehyde. The chain is Dihydroxyacetone kinase 2 (DAK2) from Saccharomyces cerevisiae (strain ATCC 204508 / S288c) (Baker's yeast).